The following is a 106-amino-acid chain: Gibberellin-regulated protein 12 (106 aa).

The N-terminal stretch at M1 to G22 is a signal peptide.

It belongs to the GASA family. Post-translationally, six disulfide bonds may be present.

It is found in the secreted. Gibberellin-regulated protein that may function in hormonal controlled steps of development such as seed germination, flowering and seed maturation. This is Gibberellin-regulated protein 12 (GASA12) from Arabidopsis thaliana (Mouse-ear cress).